A 186-amino-acid chain; its full sequence is ATP synthase subunit b (186 aa).

A helical membrane pass occupies residues 28–48; that stretch reads IVWSIIPFAVILFVFWKFVLP.

It belongs to the ATPase B chain family. As to quaternary structure, F-type ATPases have 2 components, F(1) - the catalytic core - and F(0) - the membrane proton channel. F(1) has five subunits: alpha(3), beta(3), gamma(1), delta(1), epsilon(1). F(0) has three main subunits: a(1), b(2) and c(10-14). The alpha and beta chains form an alternating ring which encloses part of the gamma chain. F(1) is attached to F(0) by a central stalk formed by the gamma and epsilon chains, while a peripheral stalk is formed by the delta and b chains.

The protein resides in the cell membrane. In terms of biological role, f(1)F(0) ATP synthase produces ATP from ADP in the presence of a proton or sodium gradient. F-type ATPases consist of two structural domains, F(1) containing the extramembraneous catalytic core and F(0) containing the membrane proton channel, linked together by a central stalk and a peripheral stalk. During catalysis, ATP synthesis in the catalytic domain of F(1) is coupled via a rotary mechanism of the central stalk subunits to proton translocation. Functionally, component of the F(0) channel, it forms part of the peripheral stalk, linking F(1) to F(0). The chain is ATP synthase subunit b from Corynebacterium jeikeium (strain K411).